A 276-amino-acid polypeptide reads, in one-letter code: Small ribosomal subunit protein uS3 (276 aa).

One can recognise a KH type-2 domain in the interval 43–111; the sequence is IRQLMSTGME…QVQLNILEVK (69 aa). Positions 218–227 are enriched in low complexity; that stretch reads AQAASAPSRG. A disordered region spans residues 218–276; that stretch reads AQAASAPSRGPRSDRGGRPGGADRGDRRRRNDRPAADAAPAAEAPAVEAAPAAAEGGQA. The segment covering 228 to 243 has biased composition (basic and acidic residues); it reads PRSDRGGRPGGADRGD. Positions 253–276 are enriched in low complexity; that stretch reads ADAAPAAEAPAVEAAPAAAEGGQA.

It belongs to the universal ribosomal protein uS3 family. In terms of assembly, part of the 30S ribosomal subunit. Forms a tight complex with proteins S10 and S14.

Binds the lower part of the 30S subunit head. Binds mRNA in the 70S ribosome, positioning it for translation. In Pseudarthrobacter chlorophenolicus (strain ATCC 700700 / DSM 12829 / CIP 107037 / JCM 12360 / KCTC 9906 / NCIMB 13794 / A6) (Arthrobacter chlorophenolicus), this protein is Small ribosomal subunit protein uS3.